A 290-amino-acid polypeptide reads, in one-letter code: Type II secretion system protein C (290 aa).

At 1–28 the chain is on the cytoplasmic side; the sequence is MTLPFRNDLLSSLLARCKTVPLSRFSQP. Residues 29–46 form a helical membrane-spanning segment; it reads LFWLLLLLLAHQCAGLTW. Topologically, residues 47–290 are periplasmic; the sequence is RLLDLGSQQA…LYDVYVGLSE (244 aa).

It belongs to the GSP C family.

It is found in the cell inner membrane. In terms of biological role, involved in a type II secretion system (T2SS, formerly general secretion pathway, GSP) for the export of proteins. The sequence is that of Type II secretion system protein C (exeC) from Aeromonas hydrophila.